Here is a 273-residue protein sequence, read N- to C-terminus: Undecaprenyl-diphosphatase (273 aa).

7 helical membrane-spanning segments follow: residues 6–26 (SLLIAAILGVVEGLTEFLPVS), 45–65 (AKTFEVVIQLGSILAVVVMFW), 90–110 (LTLIHILLGMIPAVVLGLLFH), 116–136 (LFNPINVMYALVVGGLLLIAA), 190–210 (YAASEFSFLLAVPMMMGATAL), 222–242 (GDIPMFAVGFITAFVVALIAI), and 252–272 (ISFIPFAIYRFIVAAAVYVVF).

The protein belongs to the UppP family.

It localises to the cell inner membrane. It carries out the reaction di-trans,octa-cis-undecaprenyl diphosphate + H2O = di-trans,octa-cis-undecaprenyl phosphate + phosphate + H(+). Catalyzes the dephosphorylation of undecaprenyl diphosphate (UPP). Confers resistance to bacitracin. The chain is Undecaprenyl-diphosphatase from Escherichia coli O157:H7.